The primary structure comprises 130 residues: Ribosome-binding factor A (130 aa).

The protein belongs to the RbfA family. In terms of assembly, monomer. Binds 30S ribosomal subunits, but not 50S ribosomal subunits or 70S ribosomes.

The protein localises to the cytoplasm. Functionally, one of several proteins that assist in the late maturation steps of the functional core of the 30S ribosomal subunit. Associates with free 30S ribosomal subunits (but not with 30S subunits that are part of 70S ribosomes or polysomes). Required for efficient processing of 16S rRNA. May interact with the 5'-terminal helix region of 16S rRNA. This chain is Ribosome-binding factor A, found in Flavobacterium johnsoniae (strain ATCC 17061 / DSM 2064 / JCM 8514 / BCRC 14874 / CCUG 350202 / NBRC 14942 / NCIMB 11054 / UW101) (Cytophaga johnsonae).